A 331-amino-acid chain; its full sequence is Vitamin B12 import system permease protein BtuC (331 aa).

The next 7 membrane-spanning stretches (helical) occupy residues 21 to 43, 63 to 85, 90 to 112, 116 to 138, 151 to 173, 193 to 210, and 239 to 261; these read LALL…ERWI, PRTL…MQAV, LAEP…TVLL, LLPV…FLLL, LLIG…YFST, WRHG…LWLS, and VLVL…IAFI.

It belongs to the binding-protein-dependent transport system permease family. FecCD subfamily. The complex is composed of two ATP-binding proteins (BtuD), two transmembrane proteins (BtuC) and a solute-binding protein (BtuF).

The protein resides in the cell inner membrane. In terms of biological role, part of the ABC transporter complex BtuCDF involved in vitamin B12 import. Involved in the translocation of the substrate across the membrane. This chain is Vitamin B12 import system permease protein BtuC, found in Pectobacterium atrosepticum (strain SCRI 1043 / ATCC BAA-672) (Erwinia carotovora subsp. atroseptica).